Reading from the N-terminus, the 506-residue chain is Cysteine--tRNA ligase (506 aa).

Cys34 provides a ligand contact to Zn(2+). Residues 36-46 (PTVYDFAHIGN) carry the 'HIGH' region motif. 3 residues coordinate Zn(2+): Cys230, His269, and Glu273. The short motif at 302 to 306 (KMSKS) is the 'KMSKS' region element. ATP is bound at residue Lys305.

The protein belongs to the class-I aminoacyl-tRNA synthetase family. Monomer. It depends on Zn(2+) as a cofactor.

Its subcellular location is the cytoplasm. The catalysed reaction is tRNA(Cys) + L-cysteine + ATP = L-cysteinyl-tRNA(Cys) + AMP + diphosphate. This Brucella suis (strain ATCC 23445 / NCTC 10510) protein is Cysteine--tRNA ligase.